The chain runs to 904 residues: Protein translocase subunit SecA (904 aa).

Residues Q87, 105 to 109 (GEGKT), and D507 each bind ATP. A disordered region spans residues 865–887 (GEGAEAAGQQPADAGPKIGRNDP). Residues 868 to 880 (AEAAGQQPADAGP) show a composition bias toward low complexity. Zn(2+) contacts are provided by C888, C890, C899, and H900.

Belongs to the SecA family. In terms of assembly, monomer and homodimer. Part of the essential Sec protein translocation apparatus which comprises SecA, SecYEG and auxiliary proteins SecDF-YajC and YidC. It depends on Zn(2+) as a cofactor.

The protein resides in the cell inner membrane. It localises to the cytoplasm. It carries out the reaction ATP + H2O + cellular proteinSide 1 = ADP + phosphate + cellular proteinSide 2.. Part of the Sec protein translocase complex. Interacts with the SecYEG preprotein conducting channel. Has a central role in coupling the hydrolysis of ATP to the transfer of proteins into and across the cell membrane, serving both as a receptor for the preprotein-SecB complex and as an ATP-driven molecular motor driving the stepwise translocation of polypeptide chains across the membrane. The chain is Protein translocase subunit SecA from Dechloromonas aromatica (strain RCB).